The sequence spans 503 residues: MGIKTALPAAELGLYSLVLSGALAYAGRGLLEASQDGAHRKAFRESVRPGWEYLGRKMDVADFEWVMWFTNFRNVIVFALSGHVLFAKLCTMVAPQLRSWMYAVYGVLAVVGTMGPWYLLLLLGHCMVLYVASLLGQRWLCLALGLASLASFKVDPGISWQSGFVTGTFDLQDVLFHGGSSFTVLRCTSFALESCAHPDRRYSLADLLKYNFYLPFFFFGPIMTFDRFHAQVSQEPVRPEGELWHIQAQAGLSAAAIVAVDVFFHFFYILTIPSDLKFASRLPDSALAGLAYSNLVYDWVKAAVLFGVVNTVARLDHLDPPQPPKCITALYVFGETHFDRGINDWLCKYVYDHIGGDHSTVIPELAASVATFVVTTLWLGPCDIVYLWSVLNCFGLNFELWVQKLAERGPLAQIEARLSEQMSRRVRALCGAVNFWAIIMYNLVSLNSLEFTELVARRLILTGFPQTTLAVLFVTYCGVQLVKERERSLALEEEQRQDREKLE.

Transmembrane regions (helical) follow at residues 12-31 (LGLYSLVLSGALAYAGRGLL), 65-87 (WVMWFTNFRNVIVFALSGHVLFA), 100-122 (WMYAVYGVLAVVGTMGPWYLLLL), 127-149 (MVLYVASLLGQRWLCLALGLASL), 250-272 (AGLSAAAIVAVDVFFHFFYILTI), 287-309 (LAGLAYSNLVYDWVKAAVLFGVV), 426-445 (VRALCGAVNFWAIIMYNLVS), and 460-482 (ILTGFPQTTLAVLFVTYCGVQLV).

Belongs to the membrane-bound acyltransferase family. HHAT subfamily. Interacts with SHH.

Its subcellular location is the endoplasmic reticulum membrane. In terms of biological role, negatively regulates N-terminal palmitoylation of SHH by HHAT/SKN. In Mus musculus (Mouse), this protein is Protein-cysteine N-palmitoyltransferase HHAT-like protein (Hhatl).